We begin with the raw amino-acid sequence, 239 residues long: Ribosomal RNA small subunit methyltransferase G (239 aa).

Residues Gly-77, Phe-82, 128–129, and Arg-147 contribute to the S-adenosyl-L-methionine site; that span reads AE.

It belongs to the methyltransferase superfamily. RNA methyltransferase RsmG family.

The protein localises to the cytoplasm. Its function is as follows. Specifically methylates the N7 position of guanine in position 535 of 16S rRNA. In Bacillus cereus (strain AH187), this protein is Ribosomal RNA small subunit methyltransferase G.